We begin with the raw amino-acid sequence, 193 residues long: Holliday junction branch migration complex subunit RuvA (193 aa).

The interval 1-64 (MIGRIAGTLI…EDAHLLYGFG (64 aa)) is domain I. The interval 65–143 (TAAERETFRQ…ADLGTVPGGP (79 aa)) is domain II. A flexible linker region spans residues 144–151 (AVSDDAVD). The tract at residues 151–193 (DVLNALLALGYSDKEAAQAIKQVPAGTGVSEGIKLALKALSKG) is domain III.

It belongs to the RuvA family. As to quaternary structure, homotetramer. Forms an RuvA(8)-RuvB(12)-Holliday junction (HJ) complex. HJ DNA is sandwiched between 2 RuvA tetramers; dsDNA enters through RuvA and exits via RuvB. An RuvB hexamer assembles on each DNA strand where it exits the tetramer. Each RuvB hexamer is contacted by two RuvA subunits (via domain III) on 2 adjacent RuvB subunits; this complex drives branch migration. In the full resolvosome a probable DNA-RuvA(4)-RuvB(12)-RuvC(2) complex forms which resolves the HJ.

It is found in the cytoplasm. Functionally, the RuvA-RuvB-RuvC complex processes Holliday junction (HJ) DNA during genetic recombination and DNA repair, while the RuvA-RuvB complex plays an important role in the rescue of blocked DNA replication forks via replication fork reversal (RFR). RuvA specifically binds to HJ cruciform DNA, conferring on it an open structure. The RuvB hexamer acts as an ATP-dependent pump, pulling dsDNA into and through the RuvAB complex. HJ branch migration allows RuvC to scan DNA until it finds its consensus sequence, where it cleaves and resolves the cruciform DNA. This is Holliday junction branch migration complex subunit RuvA from Ralstonia nicotianae (strain ATCC BAA-1114 / GMI1000) (Ralstonia solanacearum).